The primary structure comprises 279 residues: 2-dehydro-3-deoxyphosphooctonate aldolase (279 aa).

The protein belongs to the KdsA family.

It localises to the cytoplasm. It carries out the reaction D-arabinose 5-phosphate + phosphoenolpyruvate + H2O = 3-deoxy-alpha-D-manno-2-octulosonate-8-phosphate + phosphate. It functions in the pathway carbohydrate biosynthesis; 3-deoxy-D-manno-octulosonate biosynthesis; 3-deoxy-D-manno-octulosonate from D-ribulose 5-phosphate: step 2/3. Its pathway is bacterial outer membrane biogenesis; lipopolysaccharide biosynthesis. The sequence is that of 2-dehydro-3-deoxyphosphooctonate aldolase from Bartonella henselae (strain ATCC 49882 / DSM 28221 / CCUG 30454 / Houston 1) (Rochalimaea henselae).